We begin with the raw amino-acid sequence, 1034 residues long: Kinesin-like protein KIF28 (1034 aa).

The 348-residue stretch at 16–363 (SVRVAVRVRP…LRYAERAKKV (348 aa)) folds into the Kinesin motor domain. 119 to 126 (GQTGSGKS) lines the ATP pocket. The 64-residue stretch at 465–528 (CEVGRAASNA…LQHLDRIILG (64 aa)) folds into the FHA domain. Coiled coils occupy residues 875-904 (NQVP…LRGE) and 994-1027 (HQQS…KKKE).

The protein belongs to the TRAFAC class myosin-kinesin ATPase superfamily. Kinesin family.

Its subcellular location is the mitochondrion membrane. Functionally, microtubule-dependent motor protein required for mitochondrion morphology and transport of mitochondria in neuronal cells. This is Kinesin-like protein KIF28 from Rattus norvegicus (Rat).